The following is a 145-amino-acid chain: Endoribonuclease YbeY (145 aa).

Zn(2+)-binding residues include histidine 109, histidine 113, and histidine 119.

The protein belongs to the endoribonuclease YbeY family. The cofactor is Zn(2+).

Its subcellular location is the cytoplasm. Functionally, single strand-specific metallo-endoribonuclease involved in late-stage 70S ribosome quality control and in maturation of the 3' terminus of the 16S rRNA. This is Endoribonuclease YbeY from Ruthia magnifica subsp. Calyptogena magnifica.